A 331-amino-acid polypeptide reads, in one-letter code: Tetraacyldisaccharide 4'-kinase (331 aa).

An ATP-binding site is contributed by 55-62 (TAGGNGKT).

This sequence belongs to the LpxK family.

The catalysed reaction is a lipid A disaccharide + ATP = a lipid IVA + ADP + H(+). The protein operates within glycolipid biosynthesis; lipid IV(A) biosynthesis; lipid IV(A) from (3R)-3-hydroxytetradecanoyl-[acyl-carrier-protein] and UDP-N-acetyl-alpha-D-glucosamine: step 6/6. Functionally, transfers the gamma-phosphate of ATP to the 4'-position of a tetraacyldisaccharide 1-phosphate intermediate (termed DS-1-P) to form tetraacyldisaccharide 1,4'-bis-phosphate (lipid IVA). This Edwardsiella ictaluri (strain 93-146) protein is Tetraacyldisaccharide 4'-kinase.